A 325-amino-acid chain; its full sequence is MSWITPELIEILLTILKAVVILLVVVTCGAFMSFGERRLLGLFQNRYGPNRVGWGGSLQLVADMIKMFFKEDWIPKFSDRVIFTLAPMIAFTSLLLAFAIVPVSPGWVVADLNIGILFFLMMAGLAVYAVLFAGWSSNNKYSLLGAMRASAQTLSYEVFLGLSLMGVVAQAGSFNMTDIVNSQAHVWNVIPQFFGFITFAIAGVAVCHRHPFDQPEAEQELADGYHIEYSGMKFGLFFVGEYIGIVTISALMVTLFFGGWQGPLLPPFIWFALKTAFFMMMFILIRASLPRPRYDQVMSFGWKICLPLTLINLLVTAAVILWQAQ.

The next 8 membrane-spanning stretches (helical) occupy residues 11 to 31 (ILLT…CGAF), 81 to 101 (VIFT…FAIV), 114 to 134 (IGIL…LFAG), 154 to 174 (LSYE…AGSF), 186 to 206 (VWNV…GVAV), 237 to 257 (FFVG…TLFF), 265 to 285 (LPPF…FILI), and 304 to 324 (ICLP…LWQA).

This sequence belongs to the complex I subunit 1 family. As to quaternary structure, NDH-1 is composed of 13 different subunits. Subunits NuoA, H, J, K, L, M, N constitute the membrane sector of the complex.

The protein resides in the cell inner membrane. The catalysed reaction is a quinone + NADH + 5 H(+)(in) = a quinol + NAD(+) + 4 H(+)(out). Functionally, NDH-1 shuttles electrons from NADH, via FMN and iron-sulfur (Fe-S) centers, to quinones in the respiratory chain. The immediate electron acceptor for the enzyme in this species is believed to be ubiquinone. Couples the redox reaction to proton translocation (for every two electrons transferred, four hydrogen ions are translocated across the cytoplasmic membrane), and thus conserves the redox energy in a proton gradient. This subunit may bind ubiquinone. The polypeptide is NADH-quinone oxidoreductase subunit H (Escherichia coli O7:K1 (strain IAI39 / ExPEC)).